The chain runs to 551 residues: Arginine--tRNA ligase (551 aa).

Positions 124-134 match the 'HIGH' region motif; sequence ANPTGPLHIGH.

The protein belongs to the class-I aminoacyl-tRNA synthetase family. In terms of assembly, monomer.

It localises to the cytoplasm. The enzyme catalyses tRNA(Arg) + L-arginine + ATP = L-arginyl-tRNA(Arg) + AMP + diphosphate. The sequence is that of Arginine--tRNA ligase from Solidesulfovibrio magneticus (strain ATCC 700980 / DSM 13731 / RS-1) (Desulfovibrio magneticus).